A 203-amino-acid polypeptide reads, in one-letter code: Histidine biosynthesis bifunctional protein HisIE (203 aa).

Residues 1–114 form a phosphoribosyl-AMP cyclohydrolase region; sequence MLTEQQRREL…FGDASHQWLF (114 aa). The tract at residues 115–203 is phosphoribosyl-ATP pyrophosphohydrolase; the sequence is LYQLEQLLAE…VIDDLRKRHQ (89 aa).

It in the N-terminal section; belongs to the PRA-CH family. This sequence in the C-terminal section; belongs to the PRA-PH family.

It localises to the cytoplasm. The enzyme catalyses 1-(5-phospho-beta-D-ribosyl)-ATP + H2O = 1-(5-phospho-beta-D-ribosyl)-5'-AMP + diphosphate + H(+). It carries out the reaction 1-(5-phospho-beta-D-ribosyl)-5'-AMP + H2O = 1-(5-phospho-beta-D-ribosyl)-5-[(5-phospho-beta-D-ribosylamino)methylideneamino]imidazole-4-carboxamide. It participates in amino-acid biosynthesis; L-histidine biosynthesis; L-histidine from 5-phospho-alpha-D-ribose 1-diphosphate: step 2/9. It functions in the pathway amino-acid biosynthesis; L-histidine biosynthesis; L-histidine from 5-phospho-alpha-D-ribose 1-diphosphate: step 3/9. The protein is Histidine biosynthesis bifunctional protein HisIE (hisI) of Salmonella typhi.